A 73-amino-acid polypeptide reads, in one-letter code: Translation initiation factor IF-1 (73 aa).

In terms of domain architecture, S1-like spans 1 to 73 (MAKKDGVIEI…TRGRIVYRYK (73 aa)).

Belongs to the IF-1 family. In terms of assembly, component of the 30S ribosomal translation pre-initiation complex which assembles on the 30S ribosome in the order IF-2 and IF-3, IF-1 and N-formylmethionyl-tRNA(fMet); mRNA recruitment can occur at any time during PIC assembly.

It is found in the cytoplasm. In terms of biological role, one of the essential components for the initiation of protein synthesis. Stabilizes the binding of IF-2 and IF-3 on the 30S subunit to which N-formylmethionyl-tRNA(fMet) subsequently binds. Helps modulate mRNA selection, yielding the 30S pre-initiation complex (PIC). Upon addition of the 50S ribosomal subunit IF-1, IF-2 and IF-3 are released leaving the mature 70S translation initiation complex. This Arthrobacter sp. (strain FB24) protein is Translation initiation factor IF-1.